The primary structure comprises 223 residues: Deoxyribose-phosphate aldolase (223 aa).

Aspartate 91 serves as the catalytic Proton donor/acceptor. The active-site Schiff-base intermediate with acetaldehyde is lysine 154. Lysine 183 serves as the catalytic Proton donor/acceptor.

Belongs to the DeoC/FbaB aldolase family. DeoC type 1 subfamily.

It is found in the cytoplasm. It carries out the reaction 2-deoxy-D-ribose 5-phosphate = D-glyceraldehyde 3-phosphate + acetaldehyde. Its pathway is carbohydrate degradation; 2-deoxy-D-ribose 1-phosphate degradation; D-glyceraldehyde 3-phosphate and acetaldehyde from 2-deoxy-alpha-D-ribose 1-phosphate: step 2/2. Its function is as follows. Catalyzes a reversible aldol reaction between acetaldehyde and D-glyceraldehyde 3-phosphate to generate 2-deoxy-D-ribose 5-phosphate. The polypeptide is Deoxyribose-phosphate aldolase (Geobacillus thermodenitrificans (strain NG80-2)).